Here is a 407-residue protein sequence, read N- to C-terminus: Peptidase T (407 aa).

A Zn(2+)-binding site is contributed by His81. Asp83 is an active-site residue. Asp142 contacts Zn(2+). The active-site Proton acceptor is the Glu176. Residues Glu177, Asp199, and His381 each contribute to the Zn(2+) site.

This sequence belongs to the peptidase M20B family. Requires Zn(2+) as cofactor.

Its subcellular location is the cytoplasm. It catalyses the reaction Release of the N-terminal residue from a tripeptide.. Cleaves the N-terminal amino acid of tripeptides. This Streptococcus pneumoniae (strain Hungary19A-6) protein is Peptidase T.